We begin with the raw amino-acid sequence, 36 residues long: Toxin Bcg III 29.21 (36 aa).

An intrachain disulfide couples Cys6 to Cys31.

It localises to the secreted. It is found in the nematocyst. This Bunodosoma cangicum (Sea anemone) protein is Toxin Bcg III 29.21.